A 99-amino-acid polypeptide reads, in one-letter code: uncharacterized protein (99 aa).

Disordered stretches follow at residues Met1–Thr24 and Ser49–Thr99. Composition is skewed to basic residues over residues Val15–Thr24 and Ser71–Arg81.

This is an uncharacterized protein from Streptomyces fradiae (Streptomyces roseoflavus).